Here is a 181-residue protein sequence, read N- to C-terminus: Proteinase inhibitor A (181 aa).

The first 24 residues, 1–24 (MAASNALLLISGVLLISLAVLCHG), serve as a signal peptide directing secretion. Intrachain disulfides connect cysteine 67–cysteine 113, cysteine 134–cysteine 143, and cysteine 136–cysteine 139.

Belongs to the protease inhibitor I3 (leguminous Kunitz-type inhibitor) family.

The protein resides in the secreted. Its function is as follows. Possesses two reactive sites. Inhibits an equimolar amount of trypsin and chymotrypsin simultaneously, and inhibits kallikrein weakly. The protein is Proteinase inhibitor A of Sagittaria sagittifolia (Arrowhead).